The sequence spans 267 residues: Phosphonates import ATP-binding protein PhnC 1 (267 aa).

An ABC transporter domain is found at 3–247 (LSLDGVDLVH…ALDALYANEQ (245 aa)). 36-43 (GPSGAGKT) is a binding site for ATP.

Belongs to the ABC transporter superfamily. Phosphonates importer (TC 3.A.1.9.1) family. The complex is composed of two ATP-binding proteins (PhnC), two transmembrane proteins (PhnE) and a solute-binding protein (PhnD).

Its subcellular location is the cell inner membrane. The catalysed reaction is phosphonate(out) + ATP + H2O = phosphonate(in) + ADP + phosphate + H(+). Part of the ABC transporter complex PhnCDE involved in phosphonates import. Responsible for energy coupling to the transport system. This chain is Phosphonates import ATP-binding protein PhnC 1, found in Pseudomonas aeruginosa (strain ATCC 15692 / DSM 22644 / CIP 104116 / JCM 14847 / LMG 12228 / 1C / PRS 101 / PAO1).